The primary structure comprises 545 residues: Luciferin 4-monooxygenase (545 aa).

Residues 543 to 545 (SKL) carry the Microbody targeting signal motif.

It belongs to the ATP-dependent AMP-binding enzyme family. Mg(2+) serves as cofactor.

Its subcellular location is the peroxisome. It catalyses the reaction firefly D-luciferin + ATP + O2 = firefly oxyluciferin + hnu + AMP + CO2 + diphosphate. Produces green light with a wavelength of 562 nm. The polypeptide is Luciferin 4-monooxygenase (Photuris pensylvanica (Pennsylania firefly)).